The primary structure comprises 369 residues: Adenosine 3'-phospho 5'-phosphosulfate transporter 2 (369 aa).

N-linked (GlcNAc...) asparagine glycosylation is present at N39. 6 consecutive transmembrane segments (helical) span residues 46 to 66, 79 to 99, 115 to 135, 138 to 158, 168 to 188, and 191 to 211; these read LTQF…YGYL, YGWY…LIEL, MLIA…LGYL, PTQV…GVFI, VSAA…DSTI, and NFNL…AVIG. N222 is a glycosylation site (N-linked (GlcNAc...) asparagine). Helical transmembrane passes span 235–255, 266–285, 292–314, and 317–337; these read IGFV…PAVA, GYAF…VLAL, LLAV…LFFA, and FTFQ…LNVY.

It belongs to the nucleotide-sugar transporter family. SLC35B subfamily.

It is found in the golgi apparatus membrane. The catalysed reaction is 3'-phosphoadenylyl sulfate(in) + adenosine 3',5'-bisphosphate(out) = 3'-phosphoadenylyl sulfate(out) + adenosine 3',5'-bisphosphate(in). Probably functions as a 3'-phosphoadenylyl sulfate:adenosine 3',5'-bisphosphate antiporter at the Golgi membranes. Mediates the transport from the cytosol into the lumen of the Golgi of 3'-phosphoadenylyl sulfate/adenosine 3'-phospho 5'-phosphosulfate (PAPS), a universal sulfuryl donor for sulfation events that take place in that compartment. In Mus musculus (Mouse), this protein is Adenosine 3'-phospho 5'-phosphosulfate transporter 2.